The chain runs to 158 residues: Small ribosomal subunit protein uS19 (158 aa).

The protein belongs to the universal ribosomal protein uS19 family.

In terms of biological role, protein S19 forms a complex with S13 that binds strongly to the 16S ribosomal RNA. The sequence is that of Small ribosomal subunit protein uS19 from Pyrobaculum neutrophilum (strain DSM 2338 / JCM 9278 / NBRC 100436 / V24Sta) (Thermoproteus neutrophilus).